Reading from the N-terminus, the 221-residue chain is Ribosomal RNA large subunit methyltransferase E (221 aa).

Residues Gly-72, Trp-74, Asp-91, Asp-107, and Asp-131 each contribute to the S-adenosyl-L-methionine site. Catalysis depends on Lys-171, which acts as the Proton acceptor.

This sequence belongs to the class I-like SAM-binding methyltransferase superfamily. RNA methyltransferase RlmE family.

It localises to the cytoplasm. It carries out the reaction uridine(2552) in 23S rRNA + S-adenosyl-L-methionine = 2'-O-methyluridine(2552) in 23S rRNA + S-adenosyl-L-homocysteine + H(+). Specifically methylates the uridine in position 2552 of 23S rRNA at the 2'-O position of the ribose in the fully assembled 50S ribosomal subunit. This chain is Ribosomal RNA large subunit methyltransferase E, found in Zymomonas mobilis subsp. mobilis (strain ATCC 31821 / ZM4 / CP4).